Consider the following 901-residue polypeptide: Protein translocase subunit SecA (901 aa).

ATP contacts are provided by residues Gln-87, 105–109, and Asp-512; that span reads GEGKT. The Zn(2+) site is built by Cys-885, Cys-887, Cys-896, and His-897.

The protein belongs to the SecA family. In terms of assembly, monomer and homodimer. Part of the essential Sec protein translocation apparatus which comprises SecA, SecYEG and auxiliary proteins SecDF-YajC and YidC. Zn(2+) serves as cofactor.

It is found in the cell inner membrane. It localises to the cytoplasm. The enzyme catalyses ATP + H2O + cellular proteinSide 1 = ADP + phosphate + cellular proteinSide 2.. Functionally, part of the Sec protein translocase complex. Interacts with the SecYEG preprotein conducting channel. Has a central role in coupling the hydrolysis of ATP to the transfer of proteins into and across the cell membrane, serving both as a receptor for the preprotein-SecB complex and as an ATP-driven molecular motor driving the stepwise translocation of polypeptide chains across the membrane. This is Protein translocase subunit SecA from Salmonella arizonae (strain ATCC BAA-731 / CDC346-86 / RSK2980).